Reading from the N-terminus, the 519-residue chain is Putative ATP-dependent RNA helicase L396 (519 aa).

In terms of domain architecture, Helicase ATP-binding spans 110-258 (IKGMEEGGGG…IINWYMGPIL (149 aa)). 123 to 130 (MGCGSGKT) is a binding site for ATP. Residues 211–214 (DEVH) carry the DEAH box motif. The Helicase C-terminal domain occupies 317–457 (YLIQELFDMG…KQKYNIQKYY (141 aa)).

This sequence belongs to the DEAD box helicase family. DEAH subfamily.

The enzyme catalyses ATP + H2O = ADP + phosphate + H(+). The polypeptide is Putative ATP-dependent RNA helicase L396 (Acanthamoeba polyphaga (Amoeba)).